The primary structure comprises 355 residues: Anthranilate phosphoribosyltransferase (355 aa).

5-phospho-alpha-D-ribose 1-diphosphate-binding positions include Gly102, 105–106 (GD), Ser110, 112–115 (NIST), 130–138 (KHGNRSVSS), and Ser142. Gly102 contributes to the anthranilate binding site. Ser114 serves as a coordination point for Mg(2+). An anthranilate-binding site is contributed by Asn133. Anthranilate is bound at residue Arg188. Asp246 and Glu247 together coordinate Mg(2+).

It belongs to the anthranilate phosphoribosyltransferase family. Homodimer. The cofactor is Mg(2+).

It catalyses the reaction N-(5-phospho-beta-D-ribosyl)anthranilate + diphosphate = 5-phospho-alpha-D-ribose 1-diphosphate + anthranilate. Its pathway is amino-acid biosynthesis; L-tryptophan biosynthesis; L-tryptophan from chorismate: step 2/5. In terms of biological role, catalyzes the transfer of the phosphoribosyl group of 5-phosphorylribose-1-pyrophosphate (PRPP) to anthranilate to yield N-(5'-phosphoribosyl)-anthranilate (PRA). This chain is Anthranilate phosphoribosyltransferase, found in Pectobacterium atrosepticum (strain SCRI 1043 / ATCC BAA-672) (Erwinia carotovora subsp. atroseptica).